The primary structure comprises 773 residues: MAECRASGGGSGGDSLDKSITLPPDEIFRNLENAKRFAIDIGGSLTKLAYYSTVQHKVAKVRSFDHPGKDAEQDHEPPYEISVQEEITARLHFIKFENTYMEACLDFIRDHLVNTETKVIQATGGGAYKFKDLIEEKLRLKVDKEDVMTCLIKGCNFVLKNIPHEAFMYQKDSDPEFRFQTNHPNIFPYLLVNIGSGVSIVKVETEDRFEWIGGSSIGGGTFWGLGALLTKTKKFDELLQLASRGRHANVDMLVQDIYGGAHQTLGLSGNLIASSFGKSATADREFSKEDMAKSLLHMISNDIGQLACLYAKLHGLDRVYFGGFFIRGHPVTMRTITYSINFFSKGEVQALFLRHEGYLGAIGAFLKGAEQDNPNQYSWGENYAASSGLMSTAPELCPTQRARSGTFDLLEMDRLERPLVNLPLLLDPSSYVPDTVDLTDDALARQYWLTCFEEALDGVVKRAVASQPESVDAAERAEKFRQKYWGKLQTLRHQPFAYGTLTVRSLLDTREHCLNEFNFPDPYSKVKQKENGLALKCFQSVTRSLDSLGWEERQLALVKGLLAGNVFDWGAKAVSDVLESDPQFGFEEAKRKLQERPWLVDSYTKWLQRLKGPPHKCALIFADNSGIDIILGVFPFVRELLCRGIEVILACNSGPALNDVTYSESLIVAERIAAMDPIICTALREDRLLLVQTGSSPPCLDLSRLDKGLAVLVRERGADLVVIEGMGRAVHTNYHALLRCESLKLAVVKNAWLAERLGGQLFSVIFKYEVPAE.

A2 carries the post-translational modification N-acetylalanine. The pantothenate kinase stretch occupies residues 2-402 (AECRASGGGS…APELCPTQRA (401 aa)). Residues S196 and S199 each coordinate acetyl-CoA. 3'-nitrotyrosine is present on Y320. The interval 403-773 (RSGTFDLLEM…VIFKYEVPAE (371 aa)) is 4'-phosphopantetheine phosphatase. S404 carries the post-translational modification Phosphoserine. T406 is modified (phosphothreonine). The Mn(2+) site is built by D623, N624, and D659. Residues 724–728 (EGMGR) carry the Subfamily II EGMGR motif motif.

This sequence in the N-terminal section; belongs to the type II pantothenate kinase family. In the C-terminal section; belongs to the damage-control phosphatase family. Phosphopantetheine phosphatase (II) subfamily. In terms of assembly, homodimer. Interacts with PKM. Requires Mn(2+) as cofactor. It depends on Ni(2+) as a cofactor.

The protein localises to the cytoplasm. It catalyses the reaction (R)-4'-phosphopantetheine + H2O = (R)-pantetheine + phosphate. The catalysed reaction is (R)-4'-phosphopantetheine sulfonate + H2O = (R)-pantetheine sulfonate + phosphate. The enzyme catalyses (R)-4'-phospho-S-sulfopantetheine + H2O = (R)-S-sulfopantetheine + phosphate. Activity is strongly promoted by Co(2+), Ni(2+), Mg(2+) and Mn(2+). Activity is inhibited by EDTA. Functionally, phosphatase which shows a preference for 4'-phosphopantetheine and its oxidatively damaged forms (sulfonate or S-sulfonate), providing strong indirect evidence that the phosphatase activity pre-empts damage in the coenzyme A (CoA) pathway. Hydrolyzing excess 4'-phosphopantetheine could constitute a directed overflow mechanism to prevent its oxidation to the S-sulfonate, sulfonate, or other forms. Hydrolyzing 4'-phosphopantetheine sulfonate or S-sulfonate would forestall their conversion to inactive forms of CoA and acyl carrier protein. May play a role in the physiological regulation of CoA intracellular levels. The chain is 4'-phosphopantetheine phosphatase from Rattus norvegicus (Rat).